A 119-amino-acid polypeptide reads, in one-letter code: Large ribosomal subunit protein bL20c (119 aa).

This sequence belongs to the bacterial ribosomal protein bL20 family.

It is found in the plastid. The protein resides in the chloroplast. Its function is as follows. Binds directly to 23S ribosomal RNA and is necessary for the in vitro assembly process of the 50S ribosomal subunit. It is not involved in the protein synthesizing functions of that subunit. In Saccharum officinarum (Sugarcane), this protein is Large ribosomal subunit protein bL20c.